The sequence spans 570 residues: Putative diflavin flavoprotein A 5 (570 aa).

A zinc metallo-hydrolase region spans residues 38-231; sequence ERGTTSNSYV…LQVRLYAVGH (194 aa). The 143-residue stretch at 260-402 folds into the Flavodoxin-like domain; it reads VALLYASAYG…VGTDFAQTLK (143 aa). The interval 421–570 is flavodoxin-reductase-like; sequence VGRIVGSVCV…INHRKTGNHY (150 aa).

The protein in the N-terminal section; belongs to the zinc metallo-hydrolase group 3 family. This sequence in the C-terminal section; belongs to the flavodoxin reductase family. Fe cation serves as cofactor.

In terms of biological role, mediates electron transfer from NADH to oxygen, reducing it to water. This modular protein has 3 redox cofactors, in other organisms the same activity requires 2 or 3 proteins. This Nostoc sp. (strain PCC 7120 / SAG 25.82 / UTEX 2576) protein is Putative diflavin flavoprotein A 5 (dfa5).